A 614-amino-acid chain; its full sequence is MPAYRSRTSTHGRNMAGARGLWRATGMKNEDFGKPIIAVVNSFTQFVPGHVHLKDLGQLVAREIEKAGGVAKEFHTIAVDDGIAMGHDGMLYSLPSREVIADSVEYMVNAHCADAMVCISNCDKITPGMLMASLRLNIPSVFVSGGPMESGKVTLNGKVKSVDLIDAMVAAADDSVSDADVEAIERSACPTCGSCSGMFTANSMNCLTEALGLALPGNGSVLATHADRKGLFVEAGHLIVDMARRYYEQNDERVLPRSVASFKAFENAMTLDISMGGSTNTVLHLLAAAYEGEVPFTMADIDRLSRRVPVLCKVAPSVADVHLEDVHRAGGIMGILGELDRAGLIDASLPTVHSNSLREALERWDIKRTKSESVRTFYTAAPGGVRTEIAFSQDKRFEELDADRAKGCIRDAEHAFSKDGGLAVLYGNIARDGCIVKTAGVDDSILTFSGPARVFESQDAAVDAILGNRIKPGDVVLIRYEGPRGGPGMQEMLYPTSYLKSKGLGKQCALITDGRFSGGSSGLSIGHVSPEAAEGGAIGLVEEGDLIAFDIPNRKVHLDVSDAELERRRAAMEAKGDKAWKPAAPRTRRITMALKAYAAHTTSAALGAVRVVKD.

Position 81 (aspartate 81) interacts with Mg(2+). Residue cysteine 122 coordinates [2Fe-2S] cluster. The Mg(2+) site is built by aspartate 123 and lysine 124. Lysine 124 is modified (N6-carboxylysine). A [2Fe-2S] cluster-binding site is contributed by cysteine 195. Glutamate 491 is a Mg(2+) binding site. Serine 517 acts as the Proton acceptor in catalysis.

This sequence belongs to the IlvD/Edd family. As to quaternary structure, homodimer. The cofactor is [2Fe-2S] cluster. It depends on Mg(2+) as a cofactor.

The catalysed reaction is (2R)-2,3-dihydroxy-3-methylbutanoate = 3-methyl-2-oxobutanoate + H2O. The enzyme catalyses (2R,3R)-2,3-dihydroxy-3-methylpentanoate = (S)-3-methyl-2-oxopentanoate + H2O. The protein operates within amino-acid biosynthesis; L-isoleucine biosynthesis; L-isoleucine from 2-oxobutanoate: step 3/4. Its pathway is amino-acid biosynthesis; L-valine biosynthesis; L-valine from pyruvate: step 3/4. Functionally, functions in the biosynthesis of branched-chain amino acids. Catalyzes the dehydration of (2R,3R)-2,3-dihydroxy-3-methylpentanoate (2,3-dihydroxy-3-methylvalerate) into 2-oxo-3-methylpentanoate (2-oxo-3-methylvalerate) and of (2R)-2,3-dihydroxy-3-methylbutanoate (2,3-dihydroxyisovalerate) into 2-oxo-3-methylbutanoate (2-oxoisovalerate), the penultimate precursor to L-isoleucine and L-valine, respectively. This is Dihydroxy-acid dehydratase from Nitrobacter winogradskyi (strain ATCC 25391 / DSM 10237 / CIP 104748 / NCIMB 11846 / Nb-255).